We begin with the raw amino-acid sequence, 258 residues long: Ribosomal RNA small subunit methyltransferase A (258 aa).

S-adenosyl-L-methionine is bound by residues His9, Leu11, Gly36, Glu57, Asp83, and Asn102.

Belongs to the class I-like SAM-binding methyltransferase superfamily. rRNA adenine N(6)-methyltransferase family. RsmA subfamily.

Its subcellular location is the cytoplasm. The enzyme catalyses adenosine(1518)/adenosine(1519) in 16S rRNA + 4 S-adenosyl-L-methionine = N(6)-dimethyladenosine(1518)/N(6)-dimethyladenosine(1519) in 16S rRNA + 4 S-adenosyl-L-homocysteine + 4 H(+). Its function is as follows. Specifically dimethylates two adjacent adenosines (A1518 and A1519) in the loop of a conserved hairpin near the 3'-end of 16S rRNA in the 30S particle. May play a critical role in biogenesis of 30S subunits. The sequence is that of Ribosomal RNA small subunit methyltransferase A from Caulobacter vibrioides (strain ATCC 19089 / CIP 103742 / CB 15) (Caulobacter crescentus).